The primary structure comprises 932 residues: UPF0182 protein Syncc9902_1151 (932 aa).

The next 9 helical transmembrane spans lie at 4 to 24 (FLWILLPPVLVVVARMHVEWV), 40 to 60 (MLQLLFAGAGSIPVFLAVLWL), 85 to 105 (VLMVSGLAFLACSVVLSDLAI), 124 to 144 (MASEWKALLPIQLAIAGVSLC), 151 to 171 (WVAVAMGFALVLVVSRAWGVW), 201 to 221 (IQLGLELLVLSGTFTTAHAVW), 243 to 263 (YRWLSIGVGTNLLGVAGLVWL), 293 to 313 (LLAFVLLVLGVSCIVRGIGHL), and 315 to 335 (RLLLLCVAAIVIIESTLTPLT).

This sequence belongs to the UPF0182 family.

Its subcellular location is the cell membrane. The chain is UPF0182 protein Syncc9902_1151 from Synechococcus sp. (strain CC9902).